Here is a 509-residue protein sequence, read N- to C-terminus: Probable Xaa-Pro aminopeptidase MAC_04092 (509 aa).

Mn(2+)-binding residues include aspartate 273, aspartate 284, glutamate 437, and glutamate 478.

It belongs to the peptidase M24B family. Mn(2+) serves as cofactor.

It catalyses the reaction Release of any N-terminal amino acid, including proline, that is linked to proline, even from a dipeptide or tripeptide.. Its function is as follows. Catalyzes the removal of a penultimate prolyl residue from the N-termini of peptides. This is Probable Xaa-Pro aminopeptidase MAC_04092 from Metarhizium acridum (strain CQMa 102).